The sequence spans 569 residues: ATP-dependent RNA helicase HAS1 (569 aa).

2 disordered regions span residues 1 to 57 and 71 to 110; these read MSKG…DQNF and FKEE…FEDL. Residues 34–45 show a composition bias toward acidic residues; that stretch reads EEEISSDEEEAD. Over residues 71–85 the composition is skewed to basic and acidic residues; it reads FKEEKKQKKNKEPKT. The Q motif signature appears at 105 to 133; it reads DKFEDLGLSEPTMRAIKDMGFEKMTKVQE. A Helicase ATP-binding domain is found at 136-312; the sequence is IPPLLAGRDV…RISLRAGPLY (177 aa). 149–156 contacts ATP; that stretch reads AKTGSGKT. The DEAD box signature appears at 259-262; the sequence is DEAD. Residues 326 to 496 enclose the Helicase C-terminal domain; the sequence is GLEQGYVTCD…NIQSQLTKLI (171 aa).

It belongs to the DEAD box helicase family. DDX18/HAS1 subfamily. In terms of assembly, associates in the nucleolus with the 60S and pre-60S ribosomal subunits.

Its subcellular location is the nucleus. The protein localises to the nucleolus. It catalyses the reaction ATP + H2O = ADP + phosphate + H(+). In terms of biological role, ATP-dependent RNA helicase involved in 40S ribosomal subunit biogenesis. Required for the processing and cleavage of 35S pre-rRNA at sites A0, A1, and A2, leading to mature 18S rRNA. The chain is ATP-dependent RNA helicase HAS1 (HAS1) from Meyerozyma guilliermondii (strain ATCC 6260 / CBS 566 / DSM 6381 / JCM 1539 / NBRC 10279 / NRRL Y-324) (Yeast).